The primary structure comprises 72 residues: Heat-stable enterotoxin A3/A4 (72 aa).

A signal peptide spans 1-19; sequence MKKSILFIFLSVLSFSPFA. The propeptide occupies 20-53; the sequence is QDAKPVESSKEKITLESKKCNIAKKSNKSGPESM. 3 cysteine pairs are disulfide-bonded: Cys59–Cys64, Cys60–Cys68, and Cys63–Cys71.

It belongs to the heat-stable enterotoxin family.

It is found in the secreted. Its function is as follows. Toxin which activates the particulate form of guanylate cyclase and increases cyclic GMP levels within the host intestinal epithelial cells. This is Heat-stable enterotoxin A3/A4 (sta3) from Escherichia coli.